A 1486-amino-acid chain; its full sequence is Chromosome partition protein MukB (1486 aa).

An ATP-binding site is contributed by 34–41; sequence GGNGAGKS. 3 coiled-coil regions span residues 326–418, 444–480, and 509–603; these read LEAD…QYNQ, LETF…QAYQ, and RHLA…RAPV. A flexible hinge region spans residues 666–783; the sequence is PGGSEDQRLN…EVPLFGRAAR (118 aa). Coiled-coil stretches lie at residues 835-923, 977-1115, and 1209-1266; these read EAEI…AKLE, EMLS…TAKA, and VEAI…QNVS.

It belongs to the SMC family. MukB subfamily. Homodimerization via its hinge domain. Binds to DNA via its C-terminal region. Interacts, and probably forms a ternary complex, with MukE and MukF via its C-terminal region. The complex formation is stimulated by calcium or magnesium. Interacts with tubulin-related protein FtsZ.

The protein resides in the cytoplasm. It is found in the nucleoid. In terms of biological role, plays a central role in chromosome condensation, segregation and cell cycle progression. Functions as a homodimer, which is essential for chromosome partition. Involved in negative DNA supercoiling in vivo, and by this means organize and compact chromosomes. May achieve or facilitate chromosome segregation by condensation DNA from both sides of a centrally located replisome during cell division. The chain is Chromosome partition protein MukB from Escherichia coli (strain SMS-3-5 / SECEC).